The following is a 91-amino-acid chain: Small ribosomal subunit protein bS16 (91 aa).

Belongs to the bacterial ribosomal protein bS16 family.

The polypeptide is Small ribosomal subunit protein bS16 (Latilactobacillus sakei subsp. sakei (strain 23K) (Lactobacillus sakei subsp. sakei)).